Consider the following 99-residue polypeptide: uncharacterized protein (99 aa).

This sequence belongs to the HesB/IscA family.

This is an uncharacterized protein from Staphylococcus haemolyticus (strain JCSC1435).